A 198-amino-acid chain; its full sequence is Alpha-S1-casein (198 aa).

An N-terminal signal peptide occupies residues 1 to 15 (MKLLILTCLVASAVA). 2 disordered regions span residues 28-47 (QTQR…LKEE) and 71-97 (SEST…EQKH). A phosphoserine mark is found at serine 39, serine 80, serine 81, serine 83, serine 84, and serine 85.

This sequence belongs to the alpha-casein family. Mammary gland specific. Secreted in milk.

It is found in the secreted. In terms of biological role, important role in the capacity of milk to transport calcium phosphate. The sequence is that of Alpha-S1-casein (CSN1S1) from Cavia porcellus (Guinea pig).